We begin with the raw amino-acid sequence, 500 residues long: Maturase K (500 aa).

Belongs to the intron maturase 2 family. MatK subfamily.

It is found in the plastid. Its subcellular location is the chloroplast. Usually encoded in the trnK tRNA gene intron. Probably assists in splicing its own and other chloroplast group II introns. In Prunus laurocerasus (Cherry laurel), this protein is Maturase K.